The following is a 241-amino-acid chain: Probable septum site-determining protein MinC (241 aa).

Residues 109–135 are disordered; that stretch reads PSGARERKVDPSSKTPAKPAEPTYRPT.

The protein belongs to the MinC family. Interacts with MinD and FtsZ.

Its function is as follows. Cell division inhibitor that blocks the formation of polar Z ring septums. Rapidly oscillates between the poles of the cell to destabilize FtsZ filaments that have formed before they mature into polar Z rings. Prevents FtsZ polymerization. This Stutzerimonas stutzeri (strain A1501) (Pseudomonas stutzeri) protein is Probable septum site-determining protein MinC.